The following is a 116-amino-acid chain: Protein Wnt-5a (116 aa).

A lipid anchor (O-palmitoleoyl serine; by PORCN) is attached at Ser-1. Asn-69 and Asn-83 each carry an N-linked (GlcNAc...) asparagine glycan. The cysteines at positions 82 and 97 are disulfide-linked.

The protein belongs to the Wnt family. In terms of processing, palmitoleoylation is required for efficient binding to frizzled receptors. Depalmitoleoylation leads to Wnt signaling pathway inhibition.

It is found in the secreted. The protein localises to the extracellular space. The protein resides in the extracellular matrix. Ligand for members of the frizzled family of seven transmembrane receptors. Can activate or inhibit canonical Wnt signaling, depending on receptor context. Required during embryogenesis for extension of the primary anterior-posterior axis. The polypeptide is Protein Wnt-5a (WNT5A) (Meleagris gallopavo (Wild turkey)).